Reading from the N-terminus, the 554-residue chain is Hydroxylamine reductase (554 aa).

Positions 3, 6, 18, and 25 each coordinate [2Fe-2S] cluster. Residues His-252, Glu-276, Cys-320, Cys-408, Cys-436, Cys-461, Glu-495, and Lys-497 each coordinate hybrid [4Fe-2O-2S] cluster. At Cys-408 the chain carries Cysteine persulfide.

This sequence belongs to the HCP family. Requires [2Fe-2S] cluster as cofactor. It depends on hybrid [4Fe-2O-2S] cluster as a cofactor.

It localises to the cytoplasm. The catalysed reaction is A + NH4(+) + H2O = hydroxylamine + AH2 + H(+). Functionally, catalyzes the reduction of hydroxylamine to form NH(3) and H(2)O. This chain is Hydroxylamine reductase, found in Photobacterium profundum (strain SS9).